Here is a 1049-residue protein sequence, read N- to C-terminus: Protein argonaute 12 (1049 aa).

Over residues 1-53 (MSSRGGGGGGRRGGRGGGGGREGGGGGGGGGGRGGQGRGDLGVVGERQGGGRG) the composition is skewed to gly residues. Disordered stretches follow at residues 1-101 (MSSR…GVQV) and 144-192 (GGAP…KAVT). A compositionally biased stretch (basic and acidic residues) spans 54 to 65 (AGERGGRHDAPR). Residues 66–76 (GRGGVAVGAGA) show a composition bias toward gly residues. The span at 144 to 160 (GGAPPAGQGSSLAAAQG) shows a compositional bias: low complexity. One can recognise a PAZ domain in the interval 404-515 (PVMDFAVQYL…LPMEVCSILE (112 aa)). In terms of domain architecture, Piwi spans 694–1012 (LLIVILTEIS…GAFRARYYME (319 aa)).

Belongs to the argonaute family. Ago subfamily.

Probably involved in the RNA silencing pathway. May bind to short RNAs such as microRNAs (miRNAs) or short interfering RNAs (siRNAs), and represses the translation of mRNAs which are complementary to them. This Oryza sativa subsp. japonica (Rice) protein is Protein argonaute 12 (AGO12).